The chain runs to 264 residues: Probable DNA polymerase sliding clamp 2 (264 aa).

The DNA-binding element occupies 75–94; sequence SIAQEATVGIKISNFVRILD.

The protein belongs to the PCNA family.

Sliding clamp subunit. Responsible for tethering the catalytic subunit of DNA polymerase to DNA during high-speed replication. This Paramecium bursaria Chlorella virus 1 (PBCV-1) protein is Probable DNA polymerase sliding clamp 2.